A 404-amino-acid polypeptide reads, in one-letter code: Multidrug resistance protein MdtG (404 aa).

The next 11 helical transmembrane spans lie at 19 to 39 (LGCFLTGAAFSLVMPFLPLYV), 56 to 76 (LVFSITFLFSAIASPFWGGLA), 90 to 110 (LGMAIVMLLMGMAQNIWQFLI), 113 to 133 (ALLGLLGGFIPNANALIATQA), 144 to 164 (TLSTGGVSGALLGPLAGGLLA), 171 to 191 (PVFFITASVLFICFLLTFFFI), 222 to 242 (LFVTTLIIQVATGSIAPILTL), 254 to 274 (IAFISGMIASVPGVAALLSAP), 288 to 308 (ILIVALIISVLLLIPMSFVQT), 317 to 337 (FLLGAADGALLPAVQTLLVYN), and 376 to 396 (AVFCVTAGVVLFNAIYSWNSL).

The protein belongs to the major facilitator superfamily. DHA1 family. MdtG (TC 2.A.1.2.20) subfamily.

The protein localises to the cell inner membrane. In Salmonella paratyphi A (strain ATCC 9150 / SARB42), this protein is Multidrug resistance protein MdtG.